We begin with the raw amino-acid sequence, 233 residues long: MGQKVHPNGMRLGIIKKWNSVWFANTKDFADHLDSDYKVRQFLMKTLEKASISRIIIERPAKSIRVTIYTARPGIVIGKKGEDVEKLRISIAKITGVPVQINISEVRKPELDAKLVSDSITSQLERRVMFRRAMKRSVQNAMRQGAKGIKVEVSGRLGGAEIARREWYREGRVPLHTLRANIDYSISEAHTTYGVIGVKVWIFKGEILGGMETVERLDKPSIQTKKQYRKNRK.

A KH type-2 domain is found at 39-107; that stretch reads VRQFLMKTLE…PVQINISEVR (69 aa).

This sequence belongs to the universal ribosomal protein uS3 family. As to quaternary structure, part of the 30S ribosomal subunit. Forms a tight complex with proteins S10 and S14.

Its function is as follows. Binds the lower part of the 30S subunit head. Binds mRNA in the 70S ribosome, positioning it for translation. This Buchnera aphidicola subsp. Acyrthosiphon pisum (strain 5A) protein is Small ribosomal subunit protein uS3.